The following is a 178-amino-acid chain: Adenine phosphoribosyltransferase (178 aa).

The protein belongs to the purine/pyrimidine phosphoribosyltransferase family. As to quaternary structure, homodimer.

It is found in the cytoplasm. It catalyses the reaction AMP + diphosphate = 5-phospho-alpha-D-ribose 1-diphosphate + adenine. It participates in purine metabolism; AMP biosynthesis via salvage pathway; AMP from adenine: step 1/1. Catalyzes a salvage reaction resulting in the formation of AMP, that is energically less costly than de novo synthesis. This chain is Adenine phosphoribosyltransferase, found in Cereibacter sphaeroides (strain ATCC 17025 / ATH 2.4.3) (Rhodobacter sphaeroides).